Here is a 562-residue protein sequence, read N- to C-terminus: MAASGFLLIASFMLVLLVLARPLGSFLARLIEGDPFMPLQKIEAGLWRCSGVKNVEMNGWQYALAILLFNILGIALLFALLMMQGALPLNPENMPGMSWHLALNTAVSFVTNTNWQAYSGENTLSYLSQMAGLTVQNFLSAATGIAVAFALIRAFSRHSAATLGNAWVDLVRITLYVLLPIALIIALIFVSQGVLQNLDGYLHITTLEGVKQTLPMGPVASQEAIKMLGTNGGGFFGANSAHPFENPTAFSNFVQMLAIFLIPCALCFAFGQVVGDTRQGHALIWAMSLIFVVAVVVVMYAELAGNPHLIKLGADSNINMEGKESRFGILATSMYAVVTTAASCGAVNAMHDSFTALGGMVPMWLMQIGEVVFGGVGSGLYGMLLFVLLTVFIAGLMIGRTPEYLGKKIDVFDMKMTALAILVTPAVVLLGTALALCTDAGRAGILNPGAHGFSEVLYALSSAANNNGSAFAGLSVNTPFYNLLLAAAMFLGRFGVILPVLAIASSLVAKKRQPAGNGTLPTSGPLFIGLLVGTVLLVGALTFIPALALGPVAEHLQVWLTH.

12 helical membrane-spanning segments follow: residues 6–26, 63–83, 132–152, 175–195, 253–273, 283–303, 327–347, 356–376, 379–399, 416–436, 483–503, and 526–546; these read FLLI…LGSF, ALAI…LLMM, GLTV…FALI, LYVL…QGVL, FVQM…FGQV, LIWA…YAEL, FGIL…CGAV, ALGG…FGGV, GLYG…LMIG, MTAL…ALAL, LLLA…VLAI, and LFIG…FIPA.

Belongs to the KdpA family. In terms of assembly, the system is composed of three essential subunits: KdpA, KdpB and KdpC.

It localises to the cell inner membrane. Functionally, part of the high-affinity ATP-driven potassium transport (or Kdp) system, which catalyzes the hydrolysis of ATP coupled with the electrogenic transport of potassium into the cytoplasm. This subunit binds the periplasmic potassium ions and delivers the ions to the membrane domain of KdpB through an intramembrane tunnel. This is Potassium-transporting ATPase potassium-binding subunit from Yersinia enterocolitica serotype O:8 / biotype 1B (strain NCTC 13174 / 8081).